Reading from the N-terminus, the 509-residue chain is Proton-gated ion channel subunit pbo-5 (509 aa).

Positions 1–21 (MTRLSILQHLLTFLILSKINA) are cleaved as a signal peptide. Residues 22–275 (TSTTESYFDS…ISLKRRPLFY (254 aa)) lie on the Extracellular side of the membrane. Cysteines 193 and 207 form a disulfide. The next 3 membrane-spanning stretches (helical) occupy residues 276–296 (MVTL…GLFA), 310–330 (LGVT…EKVP), and 336–356 (VPLL…AAMT). The Cytoplasmic portion of the chain corresponds to 357 to 487 (TGIVMKVHRL…GYVRISERLD (131 aa)). A helical transmembrane segment spans residues 488–508 (ILFMFLFLSTVTIPVAVLFYL).

It belongs to the ligand-gated ion channel (TC 1.A.9) family. Acetylcholine receptor (TC 1.A.9.1) subfamily. In terms of assembly, the functional channel is a heterooligomer of pbo-5 and pbo-6. May self-associate to form homooligomers with negligible ion channel activity. Expressed in the posterior body muscles. Also detected in the RIFL, RIFR and RIS head neurons.

It is found in the membrane. In terms of biological role, forms a proton-gated ion channel with pbo-6 that is activated by acidification of the posterior coelomic space, leading to posterior body wall muscle contraction (pBoc) during the defecation cycle. Probably by regulating the defecation motor program, required for fatty acid uptake by intestinal cells. Does not bind neurotransmitters such as acetylcholine, gamma-aminobutyric acid, glycine, serotonin, glutamate or choline. This is Proton-gated ion channel subunit pbo-5 from Caenorhabditis elegans.